The following is a 246-amino-acid chain: E3 ubiquitin ligase TRIM40 (246 aa).

An RING-type zinc finger spans residues 12–55 (CPICLDPLKEAVSTDCRHLFCRMCLTQHMDKASVSGILSCPVCR). The segment at 64–105 (GDNYICHTHQKRVRRFCEASGHLLCEECLQSPEHQSHTELSI) adopts a B box-type zinc-finger fold. The Zn(2+) site is built by Cys-69, His-72, Cys-91, and His-97. Residues 105–170 (IENAISHYKE…DQTKEQLKAL (66 aa)) are a coiled coil.

This sequence belongs to the TRIM/RBCC family. Interacts with NEDD8.

It catalyses the reaction S-ubiquitinyl-[E2 ubiquitin-conjugating enzyme]-L-cysteine + [acceptor protein]-L-lysine = [E2 ubiquitin-conjugating enzyme]-L-cysteine + N(6)-ubiquitinyl-[acceptor protein]-L-lysine.. Its function is as follows. E3 ubiquitin-protein ligase that plays a role in the limitation of the innate immune response. Mediates inhibition of the RLR signaling pathway by ubiquitinating RIGI and IFIH1 receptors, leading to their proteasomal degradation. Also promotes the neddylation of IKBKG/NEMO, stabilizing NFKBIA, and thereby inhibiting of NF-kappa-B nuclear translocation and activation. This is E3 ubiquitin ligase TRIM40 (Trim40) from Mus musculus (Mouse).